A 492-amino-acid polypeptide reads, in one-letter code: Membrane-bound glycerophospholipid O-acyltransferase 1 (492 aa).

The next 6 helical transmembrane spans lie at 33 to 53 (VNFV…RIYL), 69 to 89 (ILGI…LFVL), 125 to 145 (IYIF…MIVT), 179 to 199 (PSLL…AGPC), 237 to 257 (MGAV…FLTL), and 296 to 316 (YFAW…FNGM). Active-site residues include asparagine 349 and histidine 380. The next 3 membrane-spanning stretches (helical) occupy residues 370-390 (VLTF…YFTF), 423-443 (VVTW…FVML), and 452-472 (YKSV…FLPI). Residue serine 486 is modified to Phosphoserine.

The protein belongs to the membrane-bound acyltransferase family. Highly expressed in stomach, epididymis, and colon.

The protein localises to the endoplasmic reticulum membrane. The catalysed reaction is a 1-acyl-sn-glycero-3-phosphoethanolamine + an acyl-CoA = a 1,2-diacyl-sn-glycero-3-phosphoethanolamine + CoA. It catalyses the reaction a 1-acyl-sn-glycero-3-phospho-L-serine + an acyl-CoA = a 1,2-diacyl-sn-glycero-3-phospho-L-serine + CoA. The enzyme catalyses a 1-acyl-sn-glycero-3-phosphocholine + an acyl-CoA = a 1,2-diacyl-sn-glycero-3-phosphocholine + CoA. It carries out the reaction a 1-O-(1Z-alkenyl)-sn-glycero-3-phosphoethanolamine + (9Z)-octadecenoyl-CoA = 1-O-(1Z)-alkenyl-2-(9Z)-octadecenoyl-sn-glycero-3-phosphoethanolamine + CoA. The catalysed reaction is 1-octadecanoyl-sn-glycero-3-phosphoethanolamine + (9Z)-octadecenoyl-CoA = 1-octadecanoyl-2-(9Z-octadecenoyl)-sn-glycero-3-phosphoethanolamine + CoA. It catalyses the reaction 1-(9Z-octadecenoyl)-sn-glycero-3-phospho-L-serine + (9Z)-octadecenoyl-CoA = 1,2-di-(9Z)-octadecenoyl-sn-glycero-3-phospho-L-serine + CoA. The enzyme catalyses 1-(9Z-octadecenoyl)-sn-glycero-3-phosphoethanolamine + (9Z)-octadecenoyl-CoA = 1,2-di-(9Z-octadecenoyl)-sn-glycero-3-phosphoethanolamine + CoA. It carries out the reaction 1-hexadecanoyl-sn-glycero-3-phosphoethanolamine + (9Z)-octadecenoyl-CoA = 1-hexadecanoyl-2-(9Z-octadecenoyl)-sn-glycero-3-phosphoethanolamine + CoA. The catalysed reaction is 1-(10Z-heptadecenoyl)-sn-glycero-3-phosphoethanolamine + hexadecanoyl-CoA = 1-(10Z-heptadecenoyl)-2-hexadecanoyl-sn-glycero-3-phosphoethanolamine + CoA. It catalyses the reaction 1-(9Z-octadecenoyl)-sn-glycero-3-phospho-L-serine + octadecanoyl-CoA = 1-(9Z-octadecenoyl)-2-octadecanoyl-sn-glycero-3-phospho-L-serine + CoA. The enzyme catalyses 1-(9Z-octadecenoyl)-sn-glycero-3-phospho-L-serine + (9Z)-hexadecenoyl-CoA = 1-(9Z-octadecenoyl)-2-(9Z-hexadecenoyl)-sn-glycero-3-phospho-L-serine + CoA. It carries out the reaction 1-(9Z-octadecenoyl)-sn-glycero-3-phospho-L-serine + (9Z,12Z)-octadecadienoyl-CoA = 1-(9Z-octadecenoyl)-2-(9Z,12Z-octadienoyl)-sn-glycero-3-phospho-L-serine + CoA. The catalysed reaction is 1-hexadecanoyl-sn-glycero-3-phosphocholine + (9Z)-octadecenoyl-CoA = 1-hexadecanoyl-2-(9Z-octadecenoyl)-sn-glycero-3-phosphocholine + CoA. It catalyses the reaction 1-(10Z-heptadecenoyl)-sn-glycero-3-phosphoethanolamine + (9Z)-octadecenoyl-CoA = 1-(10Z-heptadecenoyl)-2-(9Z-octadecenoyl)-sn-glycero-3-phosphoethanolamine + CoA. Its pathway is lipid metabolism; phospholipid metabolism. In terms of biological role, acyltransferase which catalyzes the transfer of an acyl group from an acyl-CoA towards a lysophospholipid producing a phospholipid and participates in the reacylation step of the phospholipid remodeling pathway also known as the Lands cycle. Acts on lysophosphatidylserine (1-acyl-2-hydroxy-sn-glycero-3-phospho-L-serine or LPS) and lysophosphatidylethanolamine (1-acyl-sn-glycero-3-phosphoethanolamine or LPE), and to a lesser extend lysophosphatidylcholine. Prefers oleoyl-CoA as the acyl donor and 1-oleoyl-LPE as acceptor. May play a role in neurite outgrowth during neuronal differentiation. The polypeptide is Membrane-bound glycerophospholipid O-acyltransferase 1 (Mus musculus (Mouse)).